The chain runs to 106 residues: Colipase A (106 aa).

An N-terminal signal peptide occupies residues 1–11 (LLLVALAVAYA). Residues 12–16 (VPDPR) constitute a propeptide, enterostatin, activation peptide. 5 disulfide bridges follow: C28–C39, C34–C50, C38–C72, C60–C80, and C74–C98. Taurodeoxycholate is bound at residue W63.

It belongs to the colipase family. Forms a 1:1 stoichiometric complex with pancreatic lipase. In terms of tissue distribution, expressed by the pancreas.

The protein resides in the secreted. In terms of biological role, colipase is a cofactor of pancreatic lipase. It allows the lipase to anchor itself to the lipid-water interface. Without colipase the enzyme is washed off by bile salts, which have an inhibitory effect on the lipase. Its function is as follows. Enterostatin has a biological activity as a satiety signal. The polypeptide is Colipase A (CLPS1) (Equus caballus (Horse)).